Here is a 295-residue protein sequence, read N- to C-terminus: Phosphatidylserine decarboxylase proenzyme (295 aa).

Catalysis depends on charge relay system; for autoendoproteolytic cleavage activity residues D113, H169, and S256. S256 acts as the Schiff-base intermediate with substrate; via pyruvic acid; for decarboxylase activity in catalysis. S256 is subject to Pyruvic acid (Ser); by autocatalysis.

This sequence belongs to the phosphatidylserine decarboxylase family. PSD-B subfamily. Prokaryotic type II sub-subfamily. In terms of assembly, heterodimer of a large membrane-associated beta subunit and a small pyruvoyl-containing alpha subunit. Pyruvate serves as cofactor. Post-translationally, is synthesized initially as an inactive proenzyme. Formation of the active enzyme involves a self-maturation process in which the active site pyruvoyl group is generated from an internal serine residue via an autocatalytic post-translational modification. Two non-identical subunits are generated from the proenzyme in this reaction, and the pyruvate is formed at the N-terminus of the alpha chain, which is derived from the carboxyl end of the proenzyme. The autoendoproteolytic cleavage occurs by a canonical serine protease mechanism, in which the side chain hydroxyl group of the serine supplies its oxygen atom to form the C-terminus of the beta chain, while the remainder of the serine residue undergoes an oxidative deamination to produce ammonia and the pyruvoyl prosthetic group on the alpha chain. During this reaction, the Ser that is part of the protease active site of the proenzyme becomes the pyruvoyl prosthetic group, which constitutes an essential element of the active site of the mature decarboxylase.

The protein localises to the cell membrane. The catalysed reaction is a 1,2-diacyl-sn-glycero-3-phospho-L-serine + H(+) = a 1,2-diacyl-sn-glycero-3-phosphoethanolamine + CO2. It functions in the pathway phospholipid metabolism; phosphatidylethanolamine biosynthesis; phosphatidylethanolamine from CDP-diacylglycerol: step 2/2. Catalyzes the formation of phosphatidylethanolamine (PtdEtn) from phosphatidylserine (PtdSer). This is Phosphatidylserine decarboxylase proenzyme from Clostridium botulinum (strain 657 / Type Ba4).